A 540-amino-acid chain; its full sequence is GMP synthase [glutamine-hydrolyzing] (540 aa).

One can recognise a Glutamine amidotransferase type-1 domain in the interval 26-216 (IIIILDFGSQ…VYHICECEPT (191 aa)). Cys103 serves as the catalytic Nucleophile. Residues His190 and Glu192 contribute to the active site. A GMPS ATP-PPase domain is found at 217-415 (WTTAAFVEEA…VGLPEEIVQR (199 aa)). 244–250 (SGGVDSS) contributes to the ATP binding site.

Homodimer.

It catalyses the reaction XMP + L-glutamine + ATP + H2O = GMP + L-glutamate + AMP + diphosphate + 2 H(+). It participates in purine metabolism; GMP biosynthesis; GMP from XMP (L-Gln route): step 1/1. Its function is as follows. Catalyzes the synthesis of GMP from XMP. The sequence is that of GMP synthase [glutamine-hydrolyzing] from Trichormus variabilis (strain ATCC 29413 / PCC 7937) (Anabaena variabilis).